A 142-amino-acid polypeptide reads, in one-letter code: Acidic phospholipase A2 PA4 (142 aa).

3 residues coordinate Ca(2+): W10, G12, and G14. Disulfide bonds link C11-C33, C32-C72, and C39-C65. Residue H36 is part of the active site. Ca(2+) is bound at residue D37.

Belongs to the phospholipase A2 family. Group III subfamily. Ca(2+) serves as cofactor. As to expression, expressed by the venom gland.

It is found in the secreted. The enzyme catalyses a 1,2-diacyl-sn-glycero-3-phosphocholine + H2O = a 1-acyl-sn-glycero-3-phosphocholine + a fatty acid + H(+). Functionally, PLA2 catalyzes the calcium-dependent hydrolysis of the 2-acyl groups in 3-sn-phosphoglycerides. The polypeptide is Acidic phospholipase A2 PA4 (Heloderma suspectum (Gila monster)).